Consider the following 549-residue polypeptide: MKQDLYKESSPPPSTTKSKGLYVIVAALVTTAIYLLYSQGYSNTHGEKDMPSVVPNLVLPANPSSDHSFAVKHIYHHNTEADANHGRMDVSGEWVRAAQKAQHLNLGQDTHRYMASNARDPYTNLPLKSRTQKVKRWRQRDPDHVESYLEAARLNPQLYGAMDFDWVEEDILVPDVTDRDTVVSLAVMASNAYVDVPFTGDWTNVSWKETGGIGWQSDGVRGHIFVDQTPGSPLVVIALKGTSAAIFDSGGDTVINDKTNDNLLFSCCCARVSYLWNTVCDCYTGESYTCDQECLEKELYAEDRYYRAVLDIYRNVTHLYPQKQIWVTGHSLGGALSAMLGRTYGIPAVGYEAPGELLPTKRLHLPSPPGIPWSQEHIWHFGHTADPIFMGVCNGASSSCSIGGYAMETSCHSGLQCMYDVVTDKGWHLSMVNHRIHTVIDEVLLAYNETAACVPPPPCQDCFNWNFVMGNDKDDDDKDKKKKKKTSTSSSVVSKTKTSTSSTVATNTMPSLPDPTCVERNWYGKCIRYDPEIKQQYGDSHTVTHVTMA.

Residues 1 to 19 are Cytoplasmic-facing; sequence MKQDLYKESSPPPSTTKSK. Residues 20–42 form a helical; Signal-anchor for type II membrane protein membrane-spanning segment; that stretch reads GLYVIVAALVTTAIYLLYSQGYS. Residues 43 to 549 are Lumenal-facing; that stretch reads NTHGEKDMPS…SHTVTHVTMA (507 aa). 2 N-linked (GlcNAc...) asparagine glycosylation sites follow: Asn-204 and Asn-315. Ser-331 functions as the Charge relay system in the catalytic mechanism. The N-linked (GlcNAc...) asparagine glycan is linked to Asn-448. A disordered region spans residues 474–510; sequence DDDDKDKKKKKKTSTSSSVVSKTKTSTSSTVATNTMP. Over residues 487–504 the composition is skewed to low complexity; the sequence is STSSSVVSKTKTSTSSTV.

This sequence belongs to the AB hydrolase superfamily. Lipase family. Binds to both phosphatidylinositol (PI) and phosphatidylinositol 3,5-bisphosphate (PIP2).

Its subcellular location is the endosome. It localises to the multivesicular body membrane. The protein localises to the prevacuolar compartment membrane. The catalysed reaction is a triacylglycerol + H2O = a diacylglycerol + a fatty acid + H(+). Lipase which is essential for lysis of subvacuolar cytoplasm to vacuole targeted bodies and intravacuolar autophagic bodies. Involved in the lysis of intravacuolar multivesicular body (MVB) vesicles. The intravacuolar membrane disintegration by ATG15 is critical to life span extension. In Yarrowia lipolytica (strain CLIB 122 / E 150) (Yeast), this protein is Putative lipase ATG15 (ATG15).